The following is a 335-amino-acid chain: MLALGKLLELTLTDHEPAEKTQVTPKGARLRWLGEGALEVRPAESDDCGLDLLLSAGIHGNETAPIELLERLLHGVANGKIRPRARVLFLFGNPAAIRKGERFIEQDINRLFNGRHELSSGFEALRAAELEQFARVFFSKPGRNRLHYDLHTAIRGSKIEQFALYPYKEGRKHSRRELARLAAAGMEAVLLQSKSSITFSAFTYEQLEAEAFTLELGKARPFGQNEQVNLDKLEERLIRIIEATEPEDESSLDGLQLFSVSREIIKHSDSFHLHLPADIENFSELSKGYLLAEDLAEMRWVVEEEGARIIFPNPKVKNGLRAGILIVPDSGQRLG.

Zn(2+) is bound by residues H59, E62, and H151. E215 is a catalytic residue.

It belongs to the AspA/AstE family. Succinylglutamate desuccinylase subfamily. Zn(2+) serves as cofactor.

The enzyme catalyses N-succinyl-L-glutamate + H2O = L-glutamate + succinate. Its pathway is amino-acid degradation; L-arginine degradation via AST pathway; L-glutamate and succinate from L-arginine: step 5/5. Its function is as follows. Transforms N(2)-succinylglutamate into succinate and glutamate. This Pseudomonas putida (strain ATCC 47054 / DSM 6125 / CFBP 8728 / NCIMB 11950 / KT2440) protein is Succinylglutamate desuccinylase.